The sequence spans 31 residues: Photosystem I reaction center subunit XII (31 aa).

The helical transmembrane segment at 7–26 (QVYVALVIALLPAVLAFRLS) threads the bilayer.

This sequence belongs to the PsaM family.

It is found in the cellular thylakoid membrane. The protein is Photosystem I reaction center subunit XII of Thermosynechococcus vestitus (strain NIES-2133 / IAM M-273 / BP-1).